Reading from the N-terminus, the 656-residue chain is Pyoverdine export ATP-binding/permease protein PvdT (656 aa).

An ABC transporter domain is found at 6–245 (IDLRGIRKSY…SANPAALQAV (240 aa)). 43–50 (GASGSGKS) is a binding site for ATP. A run of 4 helical transmembrane segments spans residues 284–304 (ALTLLGIVIGVASVVVMLAVG), 538–558 (IAAISLLVGGIGVMNIMLMTV), 589–609 (LSVVGGLAGIVLALAMGAALL), and 619–639 (LSAVIGAFACALVTGVIFGFM).

The protein belongs to the ABC transporter superfamily. Macrolide exporter (TC 3.A.1.122) family. In terms of assembly, part of the tripartite efflux system PvdRT-OpmQ, which is composed of an inner membrane component with both ATPase and permease domains, PvdT, a periplasmic membrane fusion protein, PvdR, and an outer membrane component, OpmQ.

It localises to the cell inner membrane. Its function is as follows. Part of the tripartite efflux system PvdRT-OpmQ required for the secretion into the extracellular milieu of the siderophore pyoverdine (PVD), which is involved in iron acquisition. This subunit binds PVD and drives its secretion by hydrolyzing ATP. The system is responsible for export of newly synthesized PVD after the final steps of biosynthesis have taken place in the periplasm. It is also responsible for recycling of PVD after internalization of ferri-PVD into the periplasm by the outer-membrane receptor FpvA and release of iron from PVD, thus making PVD available for new cycles of iron uptake. In Pseudomonas syringae pv. tomato (strain ATCC BAA-871 / DC3000), this protein is Pyoverdine export ATP-binding/permease protein PvdT.